Consider the following 1891-residue polypeptide: Transcription initiation factor TFIID subunit 1 (1891 aa).

3 disordered regions span residues 1 to 34, 154 to 180, and 197 to 224; these read MGPG…AGGG, KLMP…GVSE, and ASEK…SESK. The 435-residue stretch at 1-435 folds into the Protein kinase 1 domain; it reads MGPGWAGLLQ…VTQLHWEDDI (435 aa). Over residues 156-165 the composition is skewed to pro residues; it reads MPPPPPPPGP. Over residues 197–208 the composition is skewed to low complexity; the sequence is ASEKVDFSSSSD. The residue at position 328 (S328) is a Phosphoserine; by autocatalysis. The segment at 535–556 is disordered; that stretch reads PDEKEEATSNSPSKENKKESSL. The histone acetyltransferase (HAT) stretch occupies residues 538–997; it reads KEEATSNSPS…KIPNKPTQQK (460 aa). K565 carries the N6-acetyllysine modification. Residues K570 and K583 each participate in a glycyl lysine isopeptide (Lys-Gly) (interchain with G-Cter in SUMO2) cross-link. Disordered stretches follow at residues 990 to 1009, 1128 to 1148, and 1254 to 1278; these read PNKP…KKTV, MLQN…QERK, and RLKR…MKER. 3 stretches are compositionally biased toward basic and acidic residues: residues 995 to 1004, 1139 to 1148, and 1254 to 1270; these read QQKDDKEPQP, SREREEQERK, and RLKR…PPEK. Residues 1216-1294 constitute a DNA-binding region (HMG box); that stretch reads VRIRTTKDEE…CGACGAIGHM (79 aa). The tract at residues 1363–1650 is interaction with ASF1A and ASF1B; it reads VLKFPKQQLP…TAKEAALEEA (288 aa). The Nuclear localization signal signature appears at 1372-1379; sequence PPKKKRRV. Bromo domains follow at residues 1397-1505 and 1519-1628; these read RRRT…LKEK and LLDD…LTEY. The region spanning 1446–1891 is the Protein kinase 2 domain; the sequence is MDLQTLRENV…AGDTDLDSDE (446 aa). Disordered regions lie at residues 1651–1676 and 1690–1891; these read ELES…NNTS and SNLS…DSDE. Residues 1659-1668 are compositionally biased toward pro residues; it reads TPGPYTPQPP. Phosphoserine occurs at positions 1690 and 1693. The segment covering 1690-1708 has biased composition (polar residues); sequence SNLSVLDIPSATSEKQLTQ. Composition is skewed to acidic residues over residues 1711–1723 and 1741–1756; these read GDGD…EEEG and EGED…EEGD. Over residues 1764-1778 the composition is skewed to low complexity; the sequence is LSESGSDSDVESGSL. Phosphoserine occurs at positions 1799, 1802, and 1820. Positions 1830-1840 are enriched in polar residues; sequence KSNTQDTSFSS. The segment covering 1846–1855 has biased composition (acidic residues); the sequence is VSEEEEDEEE. Residue S1847 is modified to Phosphoserine. The span at 1858-1867 shows a compositional bias: polar residues; sequence SGPSVLSQVH.

This sequence belongs to the TAF1 family. In terms of assembly, component of the TFIID basal transcription factor complex, composed of TATA-box-binding protein TBP, and a number of TBP-associated factors (TAFs). TFIID consists of at least TBP, TAF1, TAF2, TAF3, TAF4, TAF5, TAF6, TAF7, TAF8, TAF9, TAF10, TAF11, TAF12 and TAF13. Interacts with TAF7; the interaction is direct. TAF1, when part of the TFIID complex, interacts with C-terminus of TP53. Part of a TFIID-containing RNA polymerase II pre-initiation complex that is composed of TBP and at least GTF2A1, GTF2A2, GTF2E1, GTF2E2, GTF2F1, GTF2H2, GTF2H3, GTF2H4, GTF2H5, GTF2B, TCEA1, ERCC2, ERCC3, TAF1, TAF2, TAF3, TAF4, TAF5, TAF6, TAF7, TAF8, TAF9, TAF10, TAF11, TAF12 and TAF13. Component of some MLL1/MLL complex, at least composed of the core components KMT2A/MLL1, ASH2L, HCFC1/HCF1, WDR5 and RBBP5, as well as the facultative components BACC1, CHD8, E2F6, HSP70, INO80C, KANSL1, LAS1L, MAX, MCRS1, MGA, KAT8/MOF, PELP1, PHF20, PRP31, RING2, RUVB1/TIP49A, RUVB2/TIP49B, SENP3, TAF1, TAF4, TAF6, TAF7, TAF9 and TEX10. RB1 interacts with the N-terminal domain of TAF1. Interacts with ASF1A and ASF1B. Interacts (via bromo domains) with acetylated lysine residues on the N-terminus of histone H1.4, H2A, H2B, H3 and H4 (in vitro). Requires Mg(2+) as cofactor. Phosphorylated by casein kinase II in vitro.

It is found in the nucleus. It carries out the reaction L-seryl-[protein] + ATP = O-phospho-L-seryl-[protein] + ADP + H(+). The enzyme catalyses L-threonyl-[protein] + ATP = O-phospho-L-threonyl-[protein] + ADP + H(+). It catalyses the reaction L-lysyl-[protein] + acetyl-CoA = N(6)-acetyl-L-lysyl-[protein] + CoA + H(+). Autophosphorylates on Ser residues. Inhibited by retinoblastoma tumor suppressor protein, RB1. Binding to TAF1 or CIITA inhibits the histone acetyltransferase activity. The TFIID basal transcription factor complex plays a major role in the initiation of RNA polymerase II (Pol II)-dependent transcription. TFIID recognizes and binds promoters with or without a TATA box via its subunit TBP, a TATA-box-binding protein, and promotes assembly of the pre-initiation complex (PIC). The TFIID complex consists of TBP and TBP-associated factors (TAFs), including TAF1, TAF2, TAF3, TAF4, TAF5, TAF6, TAF7, TAF8, TAF9, TAF10, TAF11, TAF12 and TAF13. TAF1 is the largest component and core scaffold of the TFIID complex, involved in nucleating complex assembly. TAF1 forms a promoter DNA binding subcomplex of TFIID, together with TAF7 and TAF2. Contains novel N- and C-terminal Ser/Thr kinase domains which can autophosphorylate or transphosphorylate other transcription factors. Phosphorylates TP53 on 'Thr-55' which leads to MDM2-mediated degradation of TP53. Phosphorylates GTF2A1 and GTF2F1 on Ser residues. Possesses DNA-binding activity. Exhibits histone acetyltransferase activity towards histones H3 and H4. Essential for progression of the G1 phase of the cell cycle. The polypeptide is Transcription initiation factor TFIID subunit 1 (Mus musculus (Mouse)).